Reading from the N-terminus, the 107-residue chain is Ferredoxin 1 (107 aa).

4Fe-4S ferredoxin-type domains are found at residues 2–30 (TFVV…YEGP) and 31–60 (NFLV…SEDE). Residues Cys-9 and Cys-17 each contribute to the [3Fe-4S] cluster site. Residues Cys-21, Cys-40, Cys-43, and Cys-46 each contribute to the [4Fe-4S] cluster site. Cys-50 contacts [3Fe-4S] cluster.

It depends on [4Fe-4S] cluster as a cofactor. [3Fe-4S] cluster is required as a cofactor.

In terms of biological role, ferredoxins are iron-sulfur proteins that transfer electrons in a wide variety of metabolic reactions. This chain is Ferredoxin 1, found in Stutzerimonas stutzeri (Pseudomonas stutzeri).